Consider the following 118-residue polypeptide: Large ribosomal subunit protein bL20 (118 aa).

This sequence belongs to the bacterial ribosomal protein bL20 family.

Functionally, binds directly to 23S ribosomal RNA and is necessary for the in vitro assembly process of the 50S ribosomal subunit. It is not involved in the protein synthesizing functions of that subunit. This chain is Large ribosomal subunit protein bL20, found in Shigella dysenteriae serotype 1 (strain Sd197).